The sequence spans 307 residues: Carbamate kinase (307 aa).

Belongs to the carbamate kinase family.

The protein localises to the cytoplasm. It carries out the reaction hydrogencarbonate + NH4(+) + ATP = carbamoyl phosphate + ADP + H2O + H(+). It participates in metabolic intermediate metabolism; carbamoyl phosphate degradation; CO(2) and NH(3) from carbamoyl phosphate: step 1/1. In terms of biological role, carbamate kinase involved in the arginine deiminase pathway of fermentative arginine utilization. The protein is Carbamate kinase (arcC) of Halobacterium salinarum (strain ATCC 700922 / JCM 11081 / NRC-1) (Halobacterium halobium).